Here is a 124-residue protein sequence, read N- to C-terminus: V-type proton ATPase subunit F 1 (124 aa).

Ser87 bears the Phosphoserine mark.

This sequence belongs to the V-ATPase F subunit family. As to quaternary structure, V-ATPase is a heteromultimeric enzyme made up of two complexes: the ATP-hydrolytic V1 complex and the proton translocation V0 complex. The V1 complex consists of three catalytic AB heterodimers that form a heterohexamer, three peripheral stalks each consisting of EG heterodimers, one central rotor including subunits D and F, and the regulatory subunits C and H. The proton translocation complex V0 consists of the proton transport subunit a, a ring of proteolipid subunits c9c'', rotary subunit d, subunits e and f, and the accessory subunits VhaAC45 and ATP6AP2.

Its function is as follows. Subunit of the V1 complex of vacuolar(H+)-ATPase (V-ATPase), a multisubunit enzyme composed of a peripheral complex (V1) that hydrolyzes ATP and a membrane integral complex (V0) that translocates protons. V-ATPase is responsible for acidifying and maintaining the pH of intracellular compartments and in some cell types, is targeted to the plasma membrane, where it is responsible for acidifying the extracellular environment. This chain is V-type proton ATPase subunit F 1 (Vha14-1), found in Drosophila melanogaster (Fruit fly).